The chain runs to 494 residues: Glutamyl-tRNA(Gln) amidotransferase subunit A (494 aa).

Active-site charge relay system residues include Lys-78 and Ser-158. Ser-182 functions as the Acyl-ester intermediate in the catalytic mechanism.

Belongs to the amidase family. GatA subfamily. In terms of assembly, heterotrimer of A, B and C subunits.

The catalysed reaction is L-glutamyl-tRNA(Gln) + L-glutamine + ATP + H2O = L-glutaminyl-tRNA(Gln) + L-glutamate + ADP + phosphate + H(+). Allows the formation of correctly charged Gln-tRNA(Gln) through the transamidation of misacylated Glu-tRNA(Gln) in organisms which lack glutaminyl-tRNA synthetase. The reaction takes place in the presence of glutamine and ATP through an activated gamma-phospho-Glu-tRNA(Gln). The protein is Glutamyl-tRNA(Gln) amidotransferase subunit A of Jannaschia sp. (strain CCS1).